The following is a 137-amino-acid chain: Nucleoside diphosphate kinase (137 aa).

Residues K9, F57, R85, T91, R102, and N112 each coordinate ATP. H115 (pros-phosphohistidine intermediate) is an active-site residue.

It belongs to the NDK family. As to quaternary structure, homotetramer. Mg(2+) is required as a cofactor.

It localises to the cytoplasm. It carries out the reaction a 2'-deoxyribonucleoside 5'-diphosphate + ATP = a 2'-deoxyribonucleoside 5'-triphosphate + ADP. The catalysed reaction is a ribonucleoside 5'-diphosphate + ATP = a ribonucleoside 5'-triphosphate + ADP. Major role in the synthesis of nucleoside triphosphates other than ATP. The ATP gamma phosphate is transferred to the NDP beta phosphate via a ping-pong mechanism, using a phosphorylated active-site intermediate. This chain is Nucleoside diphosphate kinase, found in Campylobacter fetus subsp. fetus (strain 82-40).